A 107-amino-acid chain; its full sequence is MSVAAAVTDATFKQEVLESSIPVLVDFWAPWCGPCRMVAPVVDEIAQQYSDQVKVVKVNTDENPSVASQYGIRSIPTLMIFKDGQRVDTVVGAVPKTTLANTLDKHL.

The region spanning 2–107 (SVAAAVTDAT…TLANTLDKHL (106 aa)) is the Thioredoxin domain. A disulfide bond links cysteine 32 and cysteine 35.

The protein belongs to the thioredoxin family.

Its function is as follows. Participates in various redox reactions through the reversible oxidation of its active center dithiol to a disulfide and catalyzes dithiol-disulfide exchange reactions. The polypeptide is Thioredoxin 1 (trxA) (Synechococcus elongatus (strain ATCC 33912 / PCC 7942 / FACHB-805) (Anacystis nidulans R2)).